We begin with the raw amino-acid sequence, 188 residues long: Holliday junction branch migration complex subunit RuvA (188 aa).

Residues 1–62 are domain I; that stretch reads MIVGVRGVLV…EDAQLLYGFL (62 aa). The interval 63–135 is domain II; the sequence is ELGEKKLFER…LSGFDTELII (73 aa). The segment at 135-139 is flexible linker; the sequence is ISASE. The domain III stretch occupies residues 140-188; it reads PKSLAVAQASEALESLGFKKDKISKALGSCSAVDTAILVKEALKLLQTI.

It belongs to the RuvA family. As to quaternary structure, homotetramer. Forms an RuvA(8)-RuvB(12)-Holliday junction (HJ) complex. HJ DNA is sandwiched between 2 RuvA tetramers; dsDNA enters through RuvA and exits via RuvB. An RuvB hexamer assembles on each DNA strand where it exits the tetramer. Each RuvB hexamer is contacted by two RuvA subunits (via domain III) on 2 adjacent RuvB subunits; this complex drives branch migration. In the full resolvosome a probable DNA-RuvA(4)-RuvB(12)-RuvC(2) complex forms which resolves the HJ.

It localises to the cytoplasm. Functionally, the RuvA-RuvB-RuvC complex processes Holliday junction (HJ) DNA during genetic recombination and DNA repair, while the RuvA-RuvB complex plays an important role in the rescue of blocked DNA replication forks via replication fork reversal (RFR). RuvA specifically binds to HJ cruciform DNA, conferring on it an open structure. The RuvB hexamer acts as an ATP-dependent pump, pulling dsDNA into and through the RuvAB complex. HJ branch migration allows RuvC to scan DNA until it finds its consensus sequence, where it cleaves and resolves the cruciform DNA. This chain is Holliday junction branch migration complex subunit RuvA, found in Sulfurimonas denitrificans (strain ATCC 33889 / DSM 1251) (Thiomicrospira denitrificans (strain ATCC 33889 / DSM 1251)).